Here is a 115-residue protein sequence, read N- to C-terminus: DNA-binding protein NP_4416A (115 aa).

Over residues 1 to 11 (MSGEPTDEDLE) the composition is skewed to acidic residues. The disordered stretch occupies residues 1–46 (MSGEPTDEDLEELRKKKMEQLKEQGGEGQSEAAEAQRQQAEAQKKA). The segment covering 12 to 25 (ELRKKKMEQLKEQG) has biased composition (basic and acidic residues). Low complexity predominate over residues 29-41 (QSEAAEAQRQQAE).

The protein belongs to the PDCD5 family.

In Natronomonas pharaonis (strain ATCC 35678 / DSM 2160 / CIP 103997 / JCM 8858 / NBRC 14720 / NCIMB 2260 / Gabara) (Halobacterium pharaonis), this protein is DNA-binding protein NP_4416A.